Here is a 132-residue protein sequence, read N- to C-terminus: Transmembrane protein 170B (132 aa).

Topologically, residues 1–37 (MRAEGADHSMINLSVQQVLSLWAHGTVLRNLTEMWYW) are extracellular. The N-linked (GlcNAc...) asparagine glycan is linked to Asn12. Residues 38 to 58 (IFLWALFSSLFVHGAAGVLMF) form a helical membrane-spanning segment. The Cytoplasmic portion of the chain corresponds to 59–68 (VMLQRHRQGR). Residues 69 to 89 (VLSIIAVSIGFLASVTGAMIT) form a helical membrane-spanning segment. Topologically, residues 90 to 104 (SAAVAGIYRVAGKNM) are extracellular. The chain crosses the membrane as a helical span at residues 105-125 (APLEALVWGVGQTVLTLIISF). At 126–132 (SRILATL) the chain is on the cytoplasmic side.

The protein belongs to the TMEM170 family. Interacts with CTNNB1.

The protein localises to the cell membrane. The sequence is that of Transmembrane protein 170B (Tmem170b) from Rattus norvegicus (Rat).